Consider the following 203-residue polypeptide: METLSQDSLLECQICFNYYSPRRRPKLLDCKHTCCSVCLQQMRASQKDLRCPWCRGVTKLPPGYSVSELPDDPDVVAVIAIPHASENTPVFIKLPSNGCYMWPLPVSKERALLPGDIGCRLLPGNQQKPVTVVTMPMEQQPLHGNIPQDIIEEEHERRGVVKSSTWSGVCTVILVACVLVFLLGIVLHNMSCISKRFTVISCG.

The segment at 12-55 (CQICFNYYSPRRRPKLLDCKHTCCSVCLQQMRASQKDLRCPWCR) adopts an RING-type zinc-finger fold. The helical transmembrane segment at 167-187 (SGVCTVILVACVLVFLLGIVL) threads the bilayer.

The protein belongs to the RNF152 family.

The protein localises to the lysosome membrane. The enzyme catalyses S-ubiquitinyl-[E2 ubiquitin-conjugating enzyme]-L-cysteine + [acceptor protein]-L-lysine = [E2 ubiquitin-conjugating enzyme]-L-cysteine + N(6)-ubiquitinyl-[acceptor protein]-L-lysine.. It functions in the pathway protein modification; protein ubiquitination. In terms of biological role, E3 ubiquitin-protein ligase that acts as a negative regulator of mTORC1 signaling by mediating ubiquitination of RagA/RRAGA and RHEB. Catalyzes 'Lys-63'-linked polyubiquitination of RagA/RRAGA in response to amino acid starvation, thereby regulating mTORC1 signaling. Also mediates monoubiquitination of RHEB, promoting its association with the TSC-TBC complex and subsequent inhibition. Also mediates 'Lys-48'-linked polyubiquitination of target proteins and their subsequent targeting to the proteasome for degradation. This chain is E3 ubiquitin-protein ligase rnf152-B, found in Xenopus laevis (African clawed frog).